Reading from the N-terminus, the 148-residue chain is Protein-arginine-phosphatase (148 aa).

The active-site Nucleophile is the cysteine 9. 10–15 (TGNTCR) contacts substrate. Arginine 15 is an active-site residue. The Proton donor role is filled by aspartate 117.

The protein belongs to the low molecular weight phosphotyrosine protein phosphatase family. As to quaternary structure, is present in solution as a mixture of monomers, dimers and higher order oligomers (trimers and tetramers).

The enzyme catalyses N(omega)-phospho-L-arginyl-[protein] + H2O = L-arginyl-[protein] + phosphate. Irreversibly inhibited by the synthetic inhibitor cyc-SeCN-amidine, which inactivates the enzyme by inducing disulfide bond formation between the two active site cysteine residues Cys-9 and Cys-14. Its function is as follows. Catalyzes the specific dephosphorylation of phosphoarginine residues in proteins. Probably counteracts the protein arginine kinase McsB in vivo. Exhibits almost no activity against pTyr peptides. Protein arginine phosphorylation has a physiologically important role and is involved in the regulation of many critical cellular processes, such as protein homeostasis, motility, competence, and stringent and stress responses, by regulating gene expression and protein activity. This Geobacillus stearothermophilus (Bacillus stearothermophilus) protein is Protein-arginine-phosphatase (ywle).